A 125-amino-acid polypeptide reads, in one-letter code: Small ribosomal subunit protein uS12 (125 aa).

D89 carries the 3-methylthioaspartic acid modification. The disordered stretch occupies residues 101 to 125 (SLDTAGVKDRKQSRSKYGAKRPKKA). Residues 113–125 (SRSKYGAKRPKKA) show a composition bias toward basic residues.

It belongs to the universal ribosomal protein uS12 family. As to quaternary structure, part of the 30S ribosomal subunit. Contacts proteins S8 and S17. May interact with IF1 in the 30S initiation complex.

In terms of biological role, with S4 and S5 plays an important role in translational accuracy. Interacts with and stabilizes bases of the 16S rRNA that are involved in tRNA selection in the A site and with the mRNA backbone. Located at the interface of the 30S and 50S subunits, it traverses the body of the 30S subunit contacting proteins on the other side and probably holding the rRNA structure together. The combined cluster of proteins S8, S12 and S17 appears to hold together the shoulder and platform of the 30S subunit. The polypeptide is Small ribosomal subunit protein uS12 (Thiobacillus denitrificans (strain ATCC 25259 / T1)).